Consider the following 752-residue polypeptide: Cation-transporting P-type ATPase B (752 aa).

The 64-residue stretch at 15–78 folds into the HMA domain; the sequence is RRIRLDVLGM…VVEKAGYHAA (64 aa). Cys-26 and Cys-29 together coordinate a metal cation. 6 consecutive transmembrane segments (helical) span residues 105 to 125, 132 to 152, 167 to 187, 201 to 221, 361 to 381, and 390 to 410; these read LLVA…FAIV, GWGY…AWPF, METL…SSVF, AILN…VFVL, IAGV…AAWL, and AFSV…GLAT. Asp-446 functions as the 4-aspartylphosphate intermediate in the catalytic mechanism. Transmembrane regions (helical) follow at residues 491-511 and 714-734; these read MAAA…FVAV and AIPI…AMAF.

Belongs to the cation transport ATPase (P-type) (TC 3.A.3) family. Type IB subfamily.

The protein localises to the cell membrane. The enzyme catalyses ATP + H2O = ADP + phosphate + H(+). The chain is Cation-transporting P-type ATPase B (ctpB) from Mycobacterium tuberculosis (strain ATCC 25618 / H37Rv).